The primary structure comprises 298 residues: Acetylglutamate kinase (298 aa).

Residues 69–70 (GG), Arg91, and Asn196 contribute to the substrate site.

This sequence belongs to the acetylglutamate kinase family. ArgB subfamily.

It localises to the cytoplasm. It carries out the reaction N-acetyl-L-glutamate + ATP = N-acetyl-L-glutamyl 5-phosphate + ADP. It participates in amino-acid biosynthesis; L-arginine biosynthesis; N(2)-acetyl-L-ornithine from L-glutamate: step 2/4. Functionally, catalyzes the ATP-dependent phosphorylation of N-acetyl-L-glutamate. This is Acetylglutamate kinase from Nitrobacter winogradskyi (strain ATCC 25391 / DSM 10237 / CIP 104748 / NCIMB 11846 / Nb-255).